A 200-amino-acid polypeptide reads, in one-letter code: Recombination protein RecR (200 aa).

The segment at 58–73 adopts a C4-type zinc-finger fold; it reads CSICGNITEDDPCPIC. A Toprim domain is found at 81 to 177; the sequence is SQILVVEQSQ…KVTRLAHGLS (97 aa).

The protein belongs to the RecR family.

Functionally, may play a role in DNA repair. It seems to be involved in an RecBC-independent recombinational process of DNA repair. It may act with RecF and RecO. The polypeptide is Recombination protein RecR (Limosilactobacillus reuteri (strain DSM 20016) (Lactobacillus reuteri)).